The primary structure comprises 151 residues: MSRLIHLSFVLALLACLTGTISANPIDDDRDRLNQLLSNPEPADDAELLRNTQEAIALYKKHARRTLPGHQVELDLDRDIRAFETENLTVDGLPIQGGVWDLIKKGADKVPDEVKDQAKELAKTTAKALFNKLTEYLKKKISGEDAAKKDT.

Positions 1-23 (MSRLIHLSFVLALLACLTGTISA) are cleaved as a signal peptide.

The protein belongs to the Turandot family.

It is found in the secreted. In terms of biological role, a humoral factor that may play a role in stress tolerance. This Drosophila persimilis (Fruit fly) protein is Protein Turandot Z.